We begin with the raw amino-acid sequence, 182 residues long: Protein Syd (182 aa).

This sequence belongs to the Syd family.

The protein localises to the cell inner membrane. In terms of biological role, interacts with the SecY protein in vivo. May bind preferentially to an uncomplexed state of SecY, thus functioning either as a chelating agent for excess SecY in the cell or as a regulatory factor that negatively controls the translocase function. The chain is Protein Syd from Pectobacterium carotovorum subsp. carotovorum (strain PC1).